The chain runs to 428 residues: Histidinol dehydrogenase homolog (428 aa).

Zn(2+) contacts are provided by Gln250 and His253. Residues Glu320 and His321 each act as proton acceptor in the active site. The Zn(2+) site is built by Asp354 and His413.

Belongs to the histidinol dehydrogenase family. Zn(2+) is required as a cofactor.

In Pelagibacter ubique (strain HTCC1062), this protein is Histidinol dehydrogenase homolog.